A 397-amino-acid polypeptide reads, in one-letter code: Argininosuccinate synthase (397 aa).

9–17 (AYSGGLDTT) provides a ligand contact to ATP. Tyrosine 87 serves as a coordination point for L-citrulline. Glycine 117 is an ATP binding site. L-aspartate contacts are provided by threonine 119, asparagine 123, and aspartate 124. Asparagine 123 provides a ligand contact to L-citrulline. L-citrulline-binding residues include arginine 127, serine 174, serine 183, glutamate 259, and tyrosine 271.

Belongs to the argininosuccinate synthase family. Type 1 subfamily. As to quaternary structure, homotetramer.

It localises to the cytoplasm. The enzyme catalyses L-citrulline + L-aspartate + ATP = 2-(N(omega)-L-arginino)succinate + AMP + diphosphate + H(+). It functions in the pathway amino-acid biosynthesis; L-arginine biosynthesis; L-arginine from L-ornithine and carbamoyl phosphate: step 2/3. This is Argininosuccinate synthase from Pyrobaculum aerophilum (strain ATCC 51768 / DSM 7523 / JCM 9630 / CIP 104966 / NBRC 100827 / IM2).